The sequence spans 308 residues: Apolipoprotein F (308 aa).

It belongs to the apolipoprotein F family.

It localises to the secreted. Functionally, minor apolipoprotein that associates with LDL. Inhibits cholesteryl ester transfer protein (CETP) activity and appears to be an important regulator of cholesterol transport. Also associates to a lesser degree with VLDL, Apo-AI and Apo-AII. The polypeptide is Apolipoprotein F (Apof) (Rattus norvegicus (Rat)).